Consider the following 119-residue polypeptide: MSKPPLFFIVIIGLIVVAASFRFMQQRREKADNDMAPLQQKLVVVSNKREKPINDRRSRQQEVTPAGTSIRYEASFKPQSGGMEQTFRLDAQQYHALTVGDKGTLSYKGTRFVSFVGEQ.

This is an uncharacterized protein from Escherichia coli (strain K12).